Consider the following 156-residue polypeptide: ATP synthase subunit b (156 aa).

Residues 11-31 (AIAFVIFVWFCMKYVWPPLMA) form a helical membrane-spanning segment.

The protein belongs to the ATPase B chain family. F-type ATPases have 2 components, F(1) - the catalytic core - and F(0) - the membrane proton channel. F(1) has five subunits: alpha(3), beta(3), gamma(1), delta(1), epsilon(1). F(0) has three main subunits: a(1), b(2) and c(10-14). The alpha and beta chains form an alternating ring which encloses part of the gamma chain. F(1) is attached to F(0) by a central stalk formed by the gamma and epsilon chains, while a peripheral stalk is formed by the delta and b chains.

Its subcellular location is the cell inner membrane. Its function is as follows. F(1)F(0) ATP synthase produces ATP from ADP in the presence of a proton or sodium gradient. F-type ATPases consist of two structural domains, F(1) containing the extramembraneous catalytic core and F(0) containing the membrane proton channel, linked together by a central stalk and a peripheral stalk. During catalysis, ATP synthesis in the catalytic domain of F(1) is coupled via a rotary mechanism of the central stalk subunits to proton translocation. In terms of biological role, component of the F(0) channel, it forms part of the peripheral stalk, linking F(1) to F(0). The protein is ATP synthase subunit b of Klebsiella pneumoniae (strain 342).